A 500-amino-acid chain; its full sequence is NAD(P)H-quinone oxidoreductase chain 4, chloroplastic (500 aa).

Transmembrane regions (helical) follow at residues 4–24, 35–55, 87–107, 113–130, 134–154, 167–187, 208–228, 242–262, 274–294, 305–325, 330–350, 386–406, 416–436, and 463–483; these read FPWLTLIVVFPIFAGCFIFFL, YTMGICLLELLIMTYVFCYHF, IGPILLTGFITTLATLAAWPV, LFHFLMLAMYSGQIGLFS, LLLFFMMWELELIPVYLLLSM, FILYTAGGSIFLLIGVLGMGL, GLEILLYFGFLIAFAVKLPII, HYSTCMLLAGILLKMGAYGLI, SIFSPWLVIVGTIQIIYAALT, IAYSSVSHMGFIIIGIGSLTN, GAILQLLSHGFIGAALFFLGG, LALPGMSGFVAELMVFLGIIT, IIITLVMAIGIILTPIYLLSM, and FVSICIFLPVIAIGIYPDLVI.

The protein belongs to the complex I subunit 4 family.

The protein resides in the plastid. It is found in the chloroplast thylakoid membrane. The enzyme catalyses a plastoquinone + NADH + (n+1) H(+)(in) = a plastoquinol + NAD(+) + n H(+)(out). It catalyses the reaction a plastoquinone + NADPH + (n+1) H(+)(in) = a plastoquinol + NADP(+) + n H(+)(out). This is NAD(P)H-quinone oxidoreductase chain 4, chloroplastic from Lemna minor (Common duckweed).